The sequence spans 229 residues: Type III pantothenate kinase (229 aa).

7–14 (DVGNSSVD) provides a ligand contact to ATP. Substrate contacts are provided by residues tyrosine 78 and 85-88 (GTDR). Aspartate 87 (proton acceptor) is an active-site residue. Threonine 110 is an ATP binding site. Threonine 161 lines the substrate pocket.

Belongs to the type III pantothenate kinase family. As to quaternary structure, homodimer. Requires NH4(+) as cofactor. The cofactor is K(+).

It localises to the cytoplasm. It catalyses the reaction (R)-pantothenate + ATP = (R)-4'-phosphopantothenate + ADP + H(+). It participates in cofactor biosynthesis; coenzyme A biosynthesis; CoA from (R)-pantothenate: step 1/5. Functionally, catalyzes the phosphorylation of pantothenate (Pan), the first step in CoA biosynthesis. The sequence is that of Type III pantothenate kinase from Aquifex aeolicus (strain VF5).